The following is a 131-amino-acid chain: MTDTTYDNSTELDPRIAARLKRDAKGLVAAVIQQYDTREVLMVGYMNDEALRRTLTTGRVTFWSRSRQEYWRKGDTSGHVQYVKGVSLDCDGDALLVEVDQVGAACHTGKRSCFLEGGPLPVVEGHRPAEQ.

Mg(2+) is bound at residue Asp89. Cys90 provides a ligand contact to Zn(2+). 2 residues coordinate Mg(2+): Asp91 and Asp93. Residues Cys106 and Cys113 each contribute to the Zn(2+) site.

It belongs to the PRA-CH family. As to quaternary structure, homodimer. Mg(2+) serves as cofactor. The cofactor is Zn(2+).

It localises to the cytoplasm. It catalyses the reaction 1-(5-phospho-beta-D-ribosyl)-5'-AMP + H2O = 1-(5-phospho-beta-D-ribosyl)-5-[(5-phospho-beta-D-ribosylamino)methylideneamino]imidazole-4-carboxamide. The protein operates within amino-acid biosynthesis; L-histidine biosynthesis; L-histidine from 5-phospho-alpha-D-ribose 1-diphosphate: step 3/9. Catalyzes the hydrolysis of the adenine ring of phosphoribosyl-AMP. In Bifidobacterium longum (strain DJO10A), this protein is Phosphoribosyl-AMP cyclohydrolase.